A 361-amino-acid chain; its full sequence is Phospho-N-acetylmuramoyl-pentapeptide-transferase (361 aa).

The next 10 membrane-spanning stretches (helical) occupy residues 25-45, 72-92, 95-115, 135-155, 169-189, 200-220, 240-260, 264-284, 289-309, and 338-358; these read TGGA…WIID, TPTM…LLWA, LNPY…VGFY, LLIE…LGRA, VMLN…VGAG, GLAI…SYLA, LAVL…FNAP, IFMG…IAVA, IVLA…IVQV, and QIVI…LSTL.

It belongs to the glycosyltransferase 4 family. MraY subfamily. Mg(2+) is required as a cofactor.

The protein localises to the cell inner membrane. It carries out the reaction UDP-N-acetyl-alpha-D-muramoyl-L-alanyl-gamma-D-glutamyl-meso-2,6-diaminopimeloyl-D-alanyl-D-alanine + di-trans,octa-cis-undecaprenyl phosphate = di-trans,octa-cis-undecaprenyl diphospho-N-acetyl-alpha-D-muramoyl-L-alanyl-D-glutamyl-meso-2,6-diaminopimeloyl-D-alanyl-D-alanine + UMP. It functions in the pathway cell wall biogenesis; peptidoglycan biosynthesis. Its function is as follows. Catalyzes the initial step of the lipid cycle reactions in the biosynthesis of the cell wall peptidoglycan: transfers peptidoglycan precursor phospho-MurNAc-pentapeptide from UDP-MurNAc-pentapeptide onto the lipid carrier undecaprenyl phosphate, yielding undecaprenyl-pyrophosphoryl-MurNAc-pentapeptide, known as lipid I. The polypeptide is Phospho-N-acetylmuramoyl-pentapeptide-transferase (Rhodopseudomonas palustris (strain ATCC BAA-98 / CGA009)).